The primary structure comprises 23 residues: Dahlein-4.2 (23 aa).

As to expression, expressed by the skin dorsal glands.

It is found in the secreted. Functionally, has no antimicrobial activity. The polypeptide is Dahlein-4.2 (Ranoidea dahlii (Dahl's aquatic frog)).